The sequence spans 443 residues: Threonine/serine transporter TdcC (443 aa).

Helical transmembrane passes span 22–42 (TTWTLGLFGTAIGAGVLFFPI), 44–64 (AGFGGLIPILLMLVLAYPIAF), 97–117 (GVVITFLYFFAICPLLWIYGV), 140–160 (FVALFLLLLMAFVIWFGKDLM), 163–183 (VMSYLVWPFIASLVLISLSLI), 207–227 (ILITVWLGISIMVFSFNFSPI), 261–281 (MLMVAVVMFFAFSCLFTLSPA), 312–332 (AITLEYAASIIALVAIFKSFF), 366–386 (ISMIFIMGSTWVVAYANPNIL), 389–409 (IEAMGAPIIASLLCLLPMYAI), and 423–443 (DNVFVTVIGLLTILNIVYKLF).

The protein belongs to the amino acid/polyamine transporter 2 family. SdaC/TdcC subfamily.

The protein localises to the cell inner membrane. It catalyses the reaction L-threonine(in) + H(+)(in) = L-threonine(out) + H(+)(out). The catalysed reaction is L-serine(in) + H(+)(in) = L-serine(out) + H(+)(out). In terms of biological role, involved in the import of threonine and serine into the cell, with the concomitant import of a proton (symport system). The chain is Threonine/serine transporter TdcC from Escherichia coli O45:K1 (strain S88 / ExPEC).